The chain runs to 200 residues: Putative AgrB-like protein (200 aa).

The next 5 helical transmembrane spans lie at 49-69, 88-108, 114-134, 148-168, and 171-191; these read LIIT…LVFM, LLCT…IQFT, LFRF…SPAV, ALKH…FLVS, and LGTI…PLKG.

Belongs to the AgrB family.

The protein localises to the cell membrane. May be involved in the proteolytic processing of a quorum sensing system signal molecule precursor. This chain is Putative AgrB-like protein, found in Lactiplantibacillus plantarum (strain ATCC BAA-793 / NCIMB 8826 / WCFS1) (Lactobacillus plantarum).